The chain runs to 459 residues: uncharacterized protein (459 aa).

Residues 5-63 form the TRAM domain; it reads PVEEGQKFPLTIRRMGINGEGIGYFKKAVVFVPGAITGEEVVVEAVKVRDRFTEAKLNK. [4Fe-4S] cluster is bound by residues Cys76, Cys82, Cys85, and Cys166. Residues Gln290, Tyr319, Asp340, and Asp388 each contribute to the S-adenosyl-L-methionine site. Residue Cys415 is the Nucleophile of the active site.

The protein belongs to the class I-like SAM-binding methyltransferase superfamily. RNA M5U methyltransferase family.

This is an uncharacterized protein from Listeria monocytogenes serotype 4b (strain F2365).